A 385-amino-acid polypeptide reads, in one-letter code: MKDVILIANAGSSSLKISIFEIQNKKVKDKIYNIFLEKNVNKILFHINKKQESATDIKDDAIEMMIDLFEDWWKKQENLNLIATGHRIVHGGKNFNKPVIVYEKVSKDLTVLIPLSPLHQPYNLQVLDLFLQKYKEISHIACFDTSFHFTNPPITKAFGLPKKYYDKGIIRYGFHGLSYKYVSSHFKEMTKEDLPTKTIIAHLGSGSSLCAIKNGLSLTSSMGFSVLDGVMMGTRTGNLDPGVVLYLIDHEKMTTKEVTELLYKKSGLLGMSGESSDMRTLLASNSPDAKFAIDLFVYRIVLEIGKLTAALEGVDCLIFTAGVGQNSAVIRKMITEKLLWLGIKIDDTKNQKNEHLISTSDSKVKVFAVPTNEELIIAEEVMKFL.

Asn-9 serves as a coordination point for Mg(2+). Lys-16 contributes to the ATP binding site. Arg-87 serves as a coordination point for substrate. Asp-144 serves as the catalytic Proton donor/acceptor. Residues 202–206 and 277–279 contribute to the ATP site; these read HLGSG and DMR. Glu-373 contacts Mg(2+).

The protein belongs to the acetokinase family. In terms of assembly, homodimer. Mg(2+) is required as a cofactor. The cofactor is Mn(2+).

It is found in the cytoplasm. The catalysed reaction is acetate + ATP = acetyl phosphate + ADP. It participates in metabolic intermediate biosynthesis; acetyl-CoA biosynthesis; acetyl-CoA from acetate: step 1/2. Catalyzes the formation of acetyl phosphate from acetate and ATP. Can also catalyze the reverse reaction. This chain is Acetate kinase, found in Rickettsia felis (strain ATCC VR-1525 / URRWXCal2) (Rickettsia azadi).